A 193-amino-acid polypeptide reads, in one-letter code: Ion-translocating oxidoreductase complex subunit A (193 aa).

6 consecutive transmembrane segments (helical) span residues 4–24 (LLLI…RFLG), 39–59 (LGMG…TWVL), 72–92 (LQTI…EMIV), 102–122 (SLGI…LAVL), 134–154 (LVFA…FAGL), and 171–191 (PIEL…AGLV).

Belongs to the NqrDE/RnfAE family. The complex is composed of six subunits: RnfA, RnfB, RnfC, RnfD, RnfE and RnfG.

The protein resides in the cell inner membrane. Functionally, part of a membrane-bound complex that couples electron transfer with translocation of ions across the membrane. In Syntrophotalea carbinolica (strain DSM 2380 / NBRC 103641 / GraBd1) (Pelobacter carbinolicus), this protein is Ion-translocating oxidoreductase complex subunit A.